Here is a 62-residue protein sequence, read N- to C-terminus: Photosystem II reaction center protein Z (62 aa).

Transmembrane regions (helical) follow at residues 8 to 28 (LVVA…ITLS) and 41 to 61 (VTAS…NSFV).

Belongs to the PsbZ family. In terms of assembly, PSII is composed of 1 copy each of membrane proteins PsbA, PsbB, PsbC, PsbD, PsbE, PsbF, PsbH, PsbI, PsbJ, PsbK, PsbL, PsbM, PsbT, PsbX, PsbY, PsbZ, Psb30/Ycf12, at least 3 peripheral proteins of the oxygen-evolving complex and a large number of cofactors. It forms dimeric complexes.

It is found in the plastid. Its subcellular location is the chloroplast thylakoid membrane. Its function is as follows. May control the interaction of photosystem II (PSII) cores with the light-harvesting antenna, regulates electron flow through the 2 photosystem reaction centers. PSII is a light-driven water plastoquinone oxidoreductase, using light energy to abstract electrons from H(2)O, generating a proton gradient subsequently used for ATP formation. The sequence is that of Photosystem II reaction center protein Z from Cyanidioschyzon merolae (strain NIES-3377 / 10D) (Unicellular red alga).